A 100-amino-acid chain; its full sequence is Small ribosomal subunit protein uS14 (100 aa).

It belongs to the universal ribosomal protein uS14 family. In terms of assembly, part of the 30S ribosomal subunit. Contacts proteins S3 and S10.

Functionally, binds 16S rRNA, required for the assembly of 30S particles and may also be responsible for determining the conformation of the 16S rRNA at the A site. This Prochlorococcus marinus (strain AS9601) protein is Small ribosomal subunit protein uS14.